The sequence spans 92 residues: Large ribosomal subunit protein eL43 (92 aa).

Residues 39 to 60 (CDFCGKYGMKRKAVGIWSCKGC) form a C4-type zinc finger.

The protein belongs to the eukaryotic ribosomal protein eL43 family.

The chain is Large ribosomal subunit protein eL43 (RPL37a) from Ostreococcus lucimarinus (strain CCE9901).